The chain runs to 524 residues: Translation initiation factor eIF2B subunit delta (524 aa).

A disordered region spans residues 1-173; it reads MATAAVAVRE…ERQQVPTRKD (173 aa). Residue alanine 2 is modified to N-acetylalanine. The residue at position 12 (serine 12) is a Phosphoserine. Residues 26 to 40 show a composition bias toward basic and acidic residues; that stretch reads AEGREMTQEEKLQLR. Basic residues predominate over residues 41 to 51; sequence KEKKQQKKKRK. Threonine 86 bears the Phosphothreonine mark. Composition is skewed to basic and acidic residues over residues 87–121 and 161–173; these read AKEK…RKGD and KKPE…TRKD. The interval 171–180 is may bind the chemical integrated stress response (ISR) inhibitor ISRIB; the sequence is RKDYGSKVSL.

It belongs to the eIF-2B alpha/beta/delta subunits family. As to quaternary structure, component of the translation initiation factor 2B (eIF2B) complex which is a heterodecamer of two sets of five different subunits: alpha, beta, gamma, delta and epsilon. Subunits alpha, beta and delta comprise a regulatory subcomplex and subunits epsilon and gamma comprise a catalytic subcomplex. Within the complex, the hexameric regulatory complex resides at the center, with the two heterodimeric catalytic subcomplexes bound on opposite sides.

The protein localises to the cytoplasm. Its subcellular location is the cytosol. Activated by the chemical integrated stress response (ISR) inhibitor ISRIB which stimulates guanine nucleotide exchange factor activity for both phosphorylated and unphosphorylated eIF2. Functionally, acts as a component of the translation initiation factor 2B (eIF2B) complex, which catalyzes the exchange of GDP for GTP on eukaryotic initiation factor 2 (eIF2) gamma subunit. Its guanine nucleotide exchange factor activity is repressed when bound to eIF2 complex phosphorylated on the alpha subunit, thereby limiting the amount of methionyl-initiator methionine tRNA available to the ribosome and consequently global translation is repressed. In Bos taurus (Bovine), this protein is Translation initiation factor eIF2B subunit delta (EIF2B4).